Consider the following 460-residue polypeptide: MRKEYLLLDRVQGPLVVLSEVEGVAYDEIVEIKIANGETKKGRVVQLQGDKAVIQVFESTTGMSLQNTTISFTGKPLEISLSREVLGREFNGIGEAIDGRGEIYSLKKYNVNGRPINPVARKYPRNFIQTGISSIDCLTTLIRGQKLPIFSGNGMPHNELAAQIIRQAKIGGGDGEEKFAVVFAAMGIKHDDKEFFRKKFEEAGVIDRLVMFTNLADDPIVERITTPRAALTTAEYLAFEEGMHILVIMTDITNYCEALRELSSSREEVPSRKGYPGYLYSDLASLYERAGMMEGKDGSITQLPILTMPNDDITHPIPDLTGYITEGQIVLSRDLSGKNIYPPVNILPSLSRLMKDGIGEGYTREDHAEVSNQLFASYSYVQDVISLSQVIGEDELSPVDKIYMEFGREFESKFLNQGFEDNRSIDETLDLAWEILSILPKSQLDRVSPEALEKHYRGDK.

It belongs to the ATPase alpha/beta chains family.

In terms of biological role, produces ATP from ADP in the presence of a proton gradient across the membrane. The V-type beta chain is a regulatory subunit. This is V-type ATP synthase beta chain 2 from Clostridium tetani (strain Massachusetts / E88).